Here is a 918-residue protein sequence, read N- to C-terminus: Exostosin-like 3 (918 aa).

Residues 1–30 (MTGYTMLRNGGVGNGGQTCMLRWSNRIRLT) are Cytoplasmic-facing. Residues 1 to 140 (MTGYTMLRNG…LKNVISQTEH (140 aa)) are required for interaction with REG3A. A helical; Signal-anchor for type II membrane protein transmembrane segment spans residues 31–51 (WLSFTLFIILVFFPLIAHYYL). Over 52-918 (TTLDEADEAG…HDKTKCFKFI (867 aa)) the chain is Lumenal. 2 disulfides stabilise this stretch: Cys-177–Cys-182 and Cys-188–Cys-236. Asn-290 carries N-linked (GlcNAc...) asparagine glycosylation. A Phosphoserine modification is found at Ser-361. Cysteines 399 and 414 form a disulfide. Residue Asn-591 is glycosylated (N-linked (GlcNAc...) asparagine). UDP-N-acetyl-alpha-D-glucosamine contacts are provided by Leu-667, Arg-671, Asn-696, Asn-722, Arg-727, Asp-743, Asp-744, and Asp-745. A Mn(2+)-binding site is contributed by Asp-745. A glycan (N-linked (GlcNAc...) asparagine) is linked at Asn-789. Cys-830 and Cys-878 are oxidised to a cystine. UDP-N-acetyl-alpha-D-glucosamine-binding residues include Glu-831, Asp-832, and Arg-875. Asp-832 is an active-site residue.

The protein belongs to the glycosyltransferase 47 family. Homodimer; disulfide-linked. Interacts with REG3A. Mn(2+) serves as cofactor. Expressed in pancreatic islet beta-cells. Expressed in lung epithelial cells. Expressed in microglia.

It is found in the endoplasmic reticulum membrane. Its subcellular location is the golgi apparatus. The protein resides in the cell membrane. The protein localises to the nucleus. It carries out the reaction 3-O-(beta-D-GlcA-(1-&gt;3)-beta-D-Gal-(1-&gt;3)-beta-D-Gal-(1-&gt;4)-beta-D-Xyl)-L-seryl-[protein] + UDP-N-acetyl-alpha-D-glucosamine = 3-O-(alpha-D-GlcNAc-(1-&gt;4)-beta-D-GlcA-(1-&gt;3)-beta-D-Gal-(1-&gt;3)-beta-D-Gal-(1-&gt;4)-beta-D-Xyl)-L-seryl-[protein] + UDP + H(+). Its pathway is glycan metabolism; heparan sulfate biosynthesis. Its function is as follows. Glycosyltransferase which regulates the biosynthesis of heparan sulfate (HS). Initiates HS synthesis by transferring the first N-acetyl-alpha-D-glucosamine (alpha-GlcNAc) residue (GlcNAcT-I activity) to the tetrasaccharide linker (GlcA-Gal-Gal-Xyl-)Ser core linker. May also transfer alpha-GlcNAc residues during HS elongation (GlcNAcT-II activity). Lacks glucuronyl transferase II (GlcAT-II) activity. Important for both skeletal development and hematopoiesis, through the formation of HS proteoglycans (HSPGs). Through the synthesis of HS, regulates postnatal pancreatic islet maturation and insulin secretion. In terms of biological role, receptor for REG3A, REG3B and REG3G, induces the activation of downstream signaling pathways such as PI3K-AKT or RAS-RAF-MEK-ERK signaling pathway. Required for the function of REG3A in regulating keratinocyte proliferation and differentiation. Required for the inhibition of skin inflammation mediated by REG3A through the activation of PI3K-AKT-STAT3 pathway. Required for the function of REG3A and REG3G in glucose tolerance in pancreas. Expressed in microglia, is activated by nociceptor-derived REG3G in response to endotoxins, leading to the inhibition of kynurenine pathway to prevent endotoxic death. The sequence is that of Exostosin-like 3 from Mus musculus (Mouse).